Here is a 103-residue protein sequence, read N- to C-terminus: Cell division protein FtsB (103 aa).

Over 1-3 (MGK) the chain is Cytoplasmic. Residues 4–21 (LTLLLLAILVWLQYSLWF) form a helical membrane-spanning segment. Residues 22 to 103 (GKNGIHDYSR…RAQTAGQNNR (82 aa)) are Periplasmic-facing. Residues 31–71 (RVNDDVAAQQATNAKLKARNDQLFAEIDDLNGGQEALEERA) are a coiled coil.

Belongs to the FtsB family. As to quaternary structure, part of a complex composed of FtsB, FtsL and FtsQ.

It is found in the cell inner membrane. Functionally, essential cell division protein. May link together the upstream cell division proteins, which are predominantly cytoplasmic, with the downstream cell division proteins, which are predominantly periplasmic. This Escherichia fergusonii (strain ATCC 35469 / DSM 13698 / CCUG 18766 / IAM 14443 / JCM 21226 / LMG 7866 / NBRC 102419 / NCTC 12128 / CDC 0568-73) protein is Cell division protein FtsB.